We begin with the raw amino-acid sequence, 151 residues long: Small ribosomal subunit protein eS6 (151 aa).

It belongs to the eukaryotic ribosomal protein eS6 family.

In Pyrobaculum calidifontis (strain DSM 21063 / JCM 11548 / VA1), this protein is Small ribosomal subunit protein eS6.